A 365-amino-acid polypeptide reads, in one-letter code: 3,4-dihydroxy-2-butanone 4-phosphate synthase (365 aa).

The tract at residues 1–201 (MALNTIDELI…IADLIHYRLI (201 aa)) is DHBP synthase. D-ribulose 5-phosphate contacts are provided by residues 27 to 28 (RE), aspartate 32, 140 to 144 (RAGHT), and glutamate 164. Glutamate 28 provides a ligand contact to Mg(2+). Mg(2+) is bound at residue histidine 143. The GTP cyclohydrolase II-like stretch occupies residues 202–365 (HERTVERIAE…LEVVEYLPAE (164 aa)).

In the N-terminal section; belongs to the DHBP synthase family. The protein in the C-terminal section; belongs to the GTP cyclohydrolase II family. Mg(2+) is required as a cofactor. Mn(2+) serves as cofactor.

The enzyme catalyses D-ribulose 5-phosphate = (2S)-2-hydroxy-3-oxobutyl phosphate + formate + H(+). It functions in the pathway cofactor biosynthesis; riboflavin biosynthesis; 2-hydroxy-3-oxobutyl phosphate from D-ribulose 5-phosphate: step 1/1. Functionally, catalyzes the conversion of D-ribulose 5-phosphate to formate and 3,4-dihydroxy-2-butanone 4-phosphate. The protein is 3,4-dihydroxy-2-butanone 4-phosphate synthase (ribB) of Pseudomonas aeruginosa (strain ATCC 15692 / DSM 22644 / CIP 104116 / JCM 14847 / LMG 12228 / 1C / PRS 101 / PAO1).